The primary structure comprises 376 residues: Putative transmembrane protein 183BP (376 aa).

2 disordered regions span residues 1 to 20 (MARG…AMPK) and 102 to 127 (AQEE…ELDG). The helical transmembrane segment at 300-320 (LNFIFIPIVMGMIFTLFTINV) threads the bilayer.

The protein belongs to the TMEM183 family. Expressed in brain, lung, pancreas, thymus, intestine and blood. Not detected in heart, placenta, liver, muscle, kidney, spleen, prostate, testis, ovary and colon.

The protein localises to the membrane. This chain is Putative transmembrane protein 183BP, found in Homo sapiens (Human).